A 253-amino-acid chain; its full sequence is Ubiquinone biosynthesis O-methyltransferase (253 aa).

4 residues coordinate S-adenosyl-L-methionine: Arg41, Gly72, Asp93, and Leu136.

Belongs to the methyltransferase superfamily. UbiG/COQ3 family.

The enzyme catalyses a 3-demethylubiquinol + S-adenosyl-L-methionine = a ubiquinol + S-adenosyl-L-homocysteine + H(+). The catalysed reaction is a 3-(all-trans-polyprenyl)benzene-1,2-diol + S-adenosyl-L-methionine = a 2-methoxy-6-(all-trans-polyprenyl)phenol + S-adenosyl-L-homocysteine + H(+). The protein operates within cofactor biosynthesis; ubiquinone biosynthesis. Functionally, O-methyltransferase that catalyzes the 2 O-methylation steps in the ubiquinone biosynthetic pathway. In Azorhizobium caulinodans (strain ATCC 43989 / DSM 5975 / JCM 20966 / LMG 6465 / NBRC 14845 / NCIMB 13405 / ORS 571), this protein is Ubiquinone biosynthesis O-methyltransferase.